Here is a 225-residue protein sequence, read N- to C-terminus: Cytidylate kinase (225 aa).

10–18 (GPASSGKST) contacts ATP.

This sequence belongs to the cytidylate kinase family. Type 1 subfamily.

It localises to the cytoplasm. The catalysed reaction is CMP + ATP = CDP + ADP. It carries out the reaction dCMP + ATP = dCDP + ADP. The polypeptide is Cytidylate kinase (Streptococcus suis (strain 98HAH33)).